The sequence spans 391 residues: Saxitoxin and tetrodotoxin-binding protein 2 (391 aa).

An N-terminal signal peptide occupies residues 1–20 (MGAVPGVVLLLMLAVLGIRA). 2 tandem repeats follow at residues 24–202 (PEEC…HKKS) and 203–391 (PEEC…PEQD). N-linked (GlcNAc...) asparagine glycosylation is found at Asn-41, Asn-54, Asn-63, Asn-97, Asn-234, Asn-268, Asn-277, and Asn-307.

In terms of assembly, homodimer or heterodimer of PSTBP1 and PSTBP2. Glycosylated.

It is found in the secreted. In terms of biological role, binds both saxitoxin and tetradotoxin. May play a role in toxin accumulation and/or excretion. This Takifugu pardalis (Panther puffer) protein is Saxitoxin and tetrodotoxin-binding protein 2 (psbp2).